Consider the following 317-residue polypeptide: MNTWNELTVHVNREAEEAVSNLLIETGSQGVAISDSADYLGQEDRFGELYPEVEQSDMIAITAYYPDTLDIEVVKADLADRLANFEGFGLATGSVNLDSQELVEEDWADNWKKYYEPARITHDLTIVPSWTDYEAKAGEKIIKLDPGMAFGTGTHPTTKMSLFALEQVLRGGETVIDVGTGSGVLSIASSLLGAKDIYAFDLDVVAVRVAQENIDMNPGTDNIHVAAGDLLKGVQQEADVIVANILADILIHLTDDAYRLVKDEGYLIMSGIISEKWDMVRESAEKAGFFLETHMVQGEWNACVFKKTDDISGVIGG.

S-adenosyl-L-methionine contacts are provided by Thr158, Gly179, Asp201, and Asn244.

It belongs to the methyltransferase superfamily. PrmA family.

It localises to the cytoplasm. The catalysed reaction is L-lysyl-[protein] + 3 S-adenosyl-L-methionine = N(6),N(6),N(6)-trimethyl-L-lysyl-[protein] + 3 S-adenosyl-L-homocysteine + 3 H(+). Functionally, methylates ribosomal protein L11. In Streptococcus agalactiae serotype Ia (strain ATCC 27591 / A909 / CDC SS700), this protein is Ribosomal protein L11 methyltransferase.